Reading from the N-terminus, the 293-residue chain is MVITVPATSANLGPGFDTLGLALNLRNEIEIVKSDYTSIEIYGENAEYLRTLKRNYFVEIFMDHYKNLTGKEDSFKFKFNNKIPLSRGLGSSSAVIIAAITAAYEMAQVPYKKDRIINLALSYEPHPDNITPAALGGFCVAKLRKNRVYFLKKFIPTYLRAVVVIPNRTISTQKSRNALKAHYNLKDIVTNISSASMITAAFFSEKFEILRNVVEDKIHQENRMKAVPELFKVREIALREGALMSTLSGSGSTFFNLAYKDDAYSIYNVLRDNFKDFTIKILQFDNVGVKVYN.

Pro84–Ala94 serves as a coordination point for ATP.

The protein belongs to the GHMP kinase family. Homoserine kinase subfamily.

The protein resides in the cytoplasm. It carries out the reaction L-homoserine + ATP = O-phospho-L-homoserine + ADP + H(+). It functions in the pathway amino-acid biosynthesis; L-threonine biosynthesis; L-threonine from L-aspartate: step 4/5. Catalyzes the ATP-dependent phosphorylation of L-homoserine to L-homoserine phosphate. This Nautilia profundicola (strain ATCC BAA-1463 / DSM 18972 / AmH) protein is Homoserine kinase.